The sequence spans 292 residues: Probable porphobilinogen deaminase (292 aa).

Cysteine 233 is subject to S-(dipyrrolylmethanemethyl)cysteine.

This sequence belongs to the HMBS family. Dipyrromethane is required as a cofactor.

The catalysed reaction is 4 porphobilinogen + H2O = hydroxymethylbilane + 4 NH4(+). It participates in porphyrin-containing compound metabolism; protoporphyrin-IX biosynthesis; coproporphyrinogen-III from 5-aminolevulinate: step 2/4. Its function is as follows. Tetrapolymerization of the monopyrrole PBG into the hydroxymethylbilane pre-uroporphyrinogen in several discrete steps. In Methanocaldococcus jannaschii (strain ATCC 43067 / DSM 2661 / JAL-1 / JCM 10045 / NBRC 100440) (Methanococcus jannaschii), this protein is Probable porphobilinogen deaminase (hemC).